A 1382-amino-acid chain; its full sequence is DNA-directed RNA polymerase subunit beta'' (1382 aa).

Zn(2+) contacts are provided by Cys224, Cys294, Cys301, and Cys304.

Belongs to the RNA polymerase beta' chain family. RpoC2 subfamily. In plastids the minimal PEP RNA polymerase catalytic core is composed of four subunits: alpha, beta, beta', and beta''. When a (nuclear-encoded) sigma factor is associated with the core the holoenzyme is formed, which can initiate transcription. Requires Zn(2+) as cofactor.

It localises to the plastid. The protein resides in the chloroplast. The catalysed reaction is RNA(n) + a ribonucleoside 5'-triphosphate = RNA(n+1) + diphosphate. Its function is as follows. DNA-dependent RNA polymerase catalyzes the transcription of DNA into RNA using the four ribonucleoside triphosphates as substrates. The protein is DNA-directed RNA polymerase subunit beta'' of Dioscorea elephantipes (Elephant's foot yam).